Here is a 222-residue protein sequence, read N- to C-terminus: Small ribosomal subunit protein eS1 (222 aa).

This sequence belongs to the eukaryotic ribosomal protein eS1 family.

In Pyrobaculum islandicum (strain DSM 4184 / JCM 9189 / GEO3), this protein is Small ribosomal subunit protein eS1.